The following is a 190-amino-acid chain: GTP cyclohydrolase 1 (190 aa).

Zn(2+) is bound by residues C75, H78, and C146.

This sequence belongs to the GTP cyclohydrolase I family. In terms of assembly, homomer.

The catalysed reaction is GTP + H2O = 7,8-dihydroneopterin 3'-triphosphate + formate + H(+). It functions in the pathway cofactor biosynthesis; 7,8-dihydroneopterin triphosphate biosynthesis; 7,8-dihydroneopterin triphosphate from GTP: step 1/1. This chain is GTP cyclohydrolase 1, found in Campylobacter lari (strain RM2100 / D67 / ATCC BAA-1060).